Consider the following 173-residue polypeptide: Placenta-specific protein 1 (173 aa).

The N-terminal stretch at Met-1 to Gln-23 is a signal peptide.

This sequence belongs to the PLAC1 family.

The protein resides in the secreted. Its function is as follows. May play a role in placental development. In Rattus norvegicus (Rat), this protein is Placenta-specific protein 1.